We begin with the raw amino-acid sequence, 244 residues long: MAGHSKWHNIQARKSVQDAKKSKFFTKVTKELMLAARAGGADTALNQRLKSAIAAAKAVNLPKDKIDQAIKKGTGELAGENLEEVLYEGYGPGGVAILVEAATDNRNRTVAEVRHLLSKGGGAMGESGCVSWMFSQKGVFSFPKTFTEDQLMEVGLEHGAEEIMDEGEVWEVHCAPADFEPLRAAFEAAGMVSEDAEVAMVPANMVALDLEAGQKLLKLIDMLEDNEDVQKVHSNADLPDEMFG.

Belongs to the TACO1 family.

It is found in the cytoplasm. This Solidesulfovibrio magneticus (strain ATCC 700980 / DSM 13731 / RS-1) (Desulfovibrio magneticus) protein is Probable transcriptional regulatory protein DMR_30850.